A 96-amino-acid chain; its full sequence is Transmembrane protein PMIS2 (96 aa).

2 helical membrane-spanning segments follow: residues 31–51 and 76–96; these read VMLALLAMILFLPFGILAIYF and WFNMLAIVAFVGIIYILVLVL.

Belongs to the CD225/Dispanin family. As to expression, specifically expressed in testis.

It localises to the membrane. In terms of biological role, may play a role in spermatozoa mobility. This Mus musculus (Mouse) protein is Transmembrane protein PMIS2.